We begin with the raw amino-acid sequence, 294 residues long: Protein farnesyltransferase/geranylgeranyltransferase type-1 subunit alpha (294 aa).

PFTA repeat units lie at residues 57–91 (YSLRALNLTGFLIMNNPAHYTVWAYRFQILNHTPS), 92–125 (YIDNELEWLDEIAEDFQKNYQVWHHRQKILSLTK), 126–160 (NYERELEFTKKMFEIDSKNYHVWSYRVWILQNFND), 161–194 (YSQELKLTNELLEKDIYNNSAWNHRFYVLFETSK), and 199–233 (SLEEELNYLKDKILFAPDNQSAWNYLCGVLDKSGP).

It belongs to the protein prenyltransferase subunit alpha family. In terms of assembly, heterodimer of an alpha(cwp1) and a beta(cpp1 or cwg2) subunit. Requires Mg(2+) as cofactor.

It carries out the reaction L-cysteinyl-[protein] + (2E,6E)-farnesyl diphosphate = S-(2E,6E)-farnesyl-L-cysteinyl-[protein] + diphosphate. It catalyses the reaction geranylgeranyl diphosphate + L-cysteinyl-[protein] = S-geranylgeranyl-L-cysteinyl-[protein] + diphosphate. Functionally, catalyzes the transfer of a farnesyl or geranyl-geranyl moiety from farnesyl or geranyl-geranyl diphosphate to a cysteine at the fourth position from the C-terminus of several proteins having the C-terminal sequence Cys-aliphatic-aliphatic-X. The alpha(cwp1) subunit is thought to participate in a stable complex with the substrate. The beta(cpp1 or cwg2) subunits bind the peptide substrate. This Schizosaccharomyces pombe (strain 972 / ATCC 24843) (Fission yeast) protein is Protein farnesyltransferase/geranylgeranyltransferase type-1 subunit alpha (cwp1).